The following is a 965-amino-acid chain: Receptor-like protein 15 (965 aa).

The signal sequence occupies residues 1 to 23 (MEGKVFLGHNLIWVMLLMGQLHG). Topologically, residues 24 to 916 (YKSCIDEEKI…GVEADESIID (893 aa)) are extracellular. N-linked (GlcNAc...) asparagine glycans are attached at residues Asn-57, Asn-95, Asn-109, and Asn-145. LRR repeat units follow at residues 80–102 (EISF…LHPF), 103–127 (EDVR…GYKS), 131–154 (LRKL…FLSA), 156–179 (TSLT…ELRD), 180–204 (LTNL…ELSS), 206–230 (RKLK…KFCT), 243–267 (LNNM…LTSL), 268–290 (TGLR…SLGS), 292–315 (QSLE…SLAN), 316–341 (LSNL…SWKP), 342–365 (KFQL…LLHQ), 366–389 (KDLR…LLAN), 391–415 (TKLK…AHNL), 417–435 (FLDV…NIGW), 437–461 (FPHL…LGNM), 462–485 (NGIQ…FVNG), and 487–512 (YSMA…NFTN). Asn-194 is a glycosylation site (N-linked (GlcNAc...) asparagine). A glycan (N-linked (GlcNAc...) asparagine) is linked at Asn-315. Asn-377 and Asn-389 each carry an N-linked (GlcNAc...) asparagine glycan. The N-linked (GlcNAc...) asparagine glycan is linked to Asn-444. An N-linked (GlcNAc...) asparagine glycan is attached at Asn-509. One copy of the LRR 18; degenerate repeat lies at 514 to 533 (LGLFMDNNLFTGKIGQGLRS). LRR repeat units follow at residues 534-557 (LINL…WIGE), 558-582 (LPSL…LFNK), 584-606 (SLQL…HDSR), 608-627 (GVVL…DTLL), 628-652 (ANVE…NIQN), 654-674 (SILL…LCGL), 675-698 (SNIQ…LSNT), 778-801 (LKLL…EFGG), 802-825 (LLEL…SISS), 827-850 (EKME…LTEL), and 851-875 (TSLS…QFNT). 2 N-linked (GlcNAc...) asparagine glycosylation sites follow: Asn-546 and Asn-581. Residues Asn-652, Asn-662, Asn-688, and Asn-697 are each glycosylated (N-linked (GlcNAc...) asparagine). N-linked (GlcNAc...) asparagine glycans are attached at residues Asn-809 and Asn-814. Asn-862, Asn-893, and Asn-898 each carry an N-linked (GlcNAc...) asparagine glycan. A helical membrane pass occupies residues 917–937 (MVSFYLSFAAAYVTILIGILA). The Cytoplasmic segment spans residues 938–965 (SLSFDSPWSRFWFYKVDAFIKKVRNLLL).

The protein belongs to the RLP family.

The protein localises to the cell membrane. The polypeptide is Receptor-like protein 15 (Arabidopsis thaliana (Mouse-ear cress)).